Reading from the N-terminus, the 359-residue chain is MSLIPYALTRPFLFGMDAEAAHELTMDMLARGQRTPLQWAWSGEQVSDPVQLAGLTFPNRVGMAAGLDKNARCIDALGAMGFGFVEVGTVTPRAQPGNPKPRMFRLPEANALINRLGFNNEGLDAFLHNVRQSNHHARPGMRPMLLGLNIGKNATTPIEDATRDYLLCLEGVYPHADYVTVNISSPNTQNLRALQSDAALDGLLGAIAERRESLARQPEKATGRPRRVPIFVKIAPDLAEEQVAVIASTLQRHGMDGVIATNTTISRDAVQGLRHAEETGGLSGAPVREASNRVIRQLRHALGKDFPIIGVGGILSAEDAVEKIRAGADVVQIYTGLIYRGPALVPQVAKALRAMPRPA.

FMN is bound by residues 65–69 (AGLDK) and Thr-89. Lys-69 contributes to the substrate binding site. 114-118 (NRLGF) contacts substrate. 2 residues coordinate FMN: Asn-149 and Asn-182. Residue Asn-182 coordinates substrate. Ser-185 functions as the Nucleophile in the catalytic mechanism. Asn-187 provides a ligand contact to substrate. Residues Lys-233 and Thr-261 each contribute to the FMN site. 262-263 (NT) lines the substrate pocket. Residues Gly-284, Gly-313, and 334–335 (YT) contribute to the FMN site.

It belongs to the dihydroorotate dehydrogenase family. Type 2 subfamily. Monomer. FMN serves as cofactor.

It localises to the cell membrane. The enzyme catalyses (S)-dihydroorotate + a quinone = orotate + a quinol. It participates in pyrimidine metabolism; UMP biosynthesis via de novo pathway; orotate from (S)-dihydroorotate (quinone route): step 1/1. Its function is as follows. Catalyzes the conversion of dihydroorotate to orotate with quinone as electron acceptor. This Paracidovorax citrulli (strain AAC00-1) (Acidovorax citrulli) protein is Dihydroorotate dehydrogenase (quinone).